Consider the following 520-residue polypeptide: Cytochrome P450 4F2 (520 aa).

A propeptide spanning residues 1–4 (MSQL) is cleaved from the precursor. Heme contacts are provided by Glu-328 and Cys-468.

It belongs to the cytochrome P450 family. Requires heme as cofactor. As to expression, liver. Also present in kidney: specifically expressed in the S2 and S3 segments of proximal tubules in cortex and outer medulla.

It localises to the microsome membrane. Its subcellular location is the endoplasmic reticulum membrane. The catalysed reaction is an organic molecule + reduced [NADPH--hemoprotein reductase] + O2 = an alcohol + oxidized [NADPH--hemoprotein reductase] + H2O + H(+). It carries out the reaction (5Z,8Z,11Z,14Z)-eicosatetraenoate + reduced [NADPH--hemoprotein reductase] + O2 = 20-hydroxy-(5Z,8Z,11Z,14Z)-eicosatetraenoate + oxidized [NADPH--hemoprotein reductase] + H2O + H(+). It catalyses the reaction (5Z,8Z,11Z)-eicosatrienoate + reduced [NADPH--hemoprotein reductase] + O2 = 20-hydroxy-(5Z,8Z,11Z)-eicosatrienoate + oxidized [NADPH--hemoprotein reductase] + H2O + H(+). The enzyme catalyses (5Z,8Z,11Z,14Z,17Z)-eicosapentaenoate + reduced [NADPH--hemoprotein reductase] + O2 = 20-hydroxy-(5Z,8Z,11Z,14Z,17Z)-eicosapentaenoate + oxidized [NADPH--hemoprotein reductase] + H2O + H(+). The catalysed reaction is (4Z,7Z,10Z,13Z,16Z,19Z)-docosahexaenoate + reduced [NADPH--hemoprotein reductase] + O2 = 22-hydroxy-(4Z,7Z,10Z,13Z,16Z,19Z)-docosahexaenoate + oxidized [NADPH--hemoprotein reductase] + H2O + H(+). It carries out the reaction 8,9-epoxy-(5Z,11Z,14Z)-eicosatrienoate + reduced [NADPH--hemoprotein reductase] + O2 = 20-hydroxy-8,9-epoxy-(5Z,11Z,14Z)-eicosatrienoate + oxidized [NADPH--hemoprotein reductase] + H2O + H(+). It catalyses the reaction (9S,10R)-epoxy-octadecanoate + reduced [NADPH--hemoprotein reductase] + O2 = 18-hydroxy-(9S,10R)-epoxy-octadecanoate + oxidized [NADPH--hemoprotein reductase] + H2O + H(+). The enzyme catalyses (9R,10S)-epoxy-octadecanoate + reduced [NADPH--hemoprotein reductase] + O2 = 18-hydroxy-(9R,10S)-epoxy-octadecanoate + oxidized [NADPH--hemoprotein reductase] + H2O + H(+). The catalysed reaction is 12,13-epoxy-(9Z)-octadecenoate + reduced [NADPH--hemoprotein reductase] + O2 = 18-hydroxy-12,13-epoxy-(9Z)-octadecenoate + oxidized [NADPH--hemoprotein reductase] + H2O + H(+). It carries out the reaction 9,10-epoxy-(12Z)-octadecenoate + reduced [NADPH--hemoprotein reductase] + O2 = 18-hydroxy-9,10-epoxy-(12Z)-octadecenoate + oxidized [NADPH--hemoprotein reductase] + H2O + H(+). It catalyses the reaction 8-hydroxy-(5Z,9E,11Z,14Z)-eicosatetraenoate + reduced [NADPH--hemoprotein reductase] + O2 = 8,20-dihydroxy-(5Z,9E,11Z,14Z)-eicosatetraenoate + oxidized [NADPH--hemoprotein reductase] + H2O + H(+). The enzyme catalyses 12-hydroxy-(5Z,8Z,10E,14Z)-eicosatetraenoate + reduced [NADPH--hemoprotein reductase] + O2 = 12,20-dihydroxy-(5Z,8Z,10E,14Z)-eicosatetraenoate + oxidized [NADPH--hemoprotein reductase] + H2O + H(+). The catalysed reaction is 12-hydroxyoctadecanoate + reduced [NADPH--hemoprotein reductase] + O2 = 12,18-dihydroxyoctadecanoate + oxidized [NADPH--hemoprotein reductase] + H2O + H(+). It carries out the reaction docosanoate + reduced [NADPH--hemoprotein reductase] + O2 = 22-hydroxydocosanoate + oxidized [NADPH--hemoprotein reductase] + H2O + H(+). It catalyses the reaction 22-hydroxydocosanoate + reduced [NADPH--hemoprotein reductase] + O2 = 22-oxodocosanoate + oxidized [NADPH--hemoprotein reductase] + 2 H2O + H(+). The enzyme catalyses 22-oxodocosanoate + reduced [NADPH--hemoprotein reductase] + O2 = docosanedioate + oxidized [NADPH--hemoprotein reductase] + H2O + 2 H(+). The catalysed reaction is tetracosanoate + reduced [NADPH--hemoprotein reductase] + O2 = 24-hydroxytetracosanoate + oxidized [NADPH--hemoprotein reductase] + H2O + H(+). It carries out the reaction hexacosanoate + reduced [NADPH--hemoprotein reductase] + O2 = 26-hydroxyhexacosanoate + oxidized [NADPH--hemoprotein reductase] + H2O + H(+). It catalyses the reaction 26-hydroxyhexacosanoate + reduced [NADPH--hemoprotein reductase] + O2 = 26-oxohexacosanoate + oxidized [NADPH--hemoprotein reductase] + 2 H2O + H(+). The enzyme catalyses 26-oxohexacosanoate + reduced [NADPH--hemoprotein reductase] + O2 = hexacosanedioate + oxidized [NADPH--hemoprotein reductase] + H2O + 2 H(+). The catalysed reaction is 3-hydroxyoctadecanoate + reduced [NADPH--hemoprotein reductase] + O2 = 3,18-dihydroxyoctadecanoate + oxidized [NADPH--hemoprotein reductase] + H2O + H(+). It carries out the reaction 3-hydroxyhexadecanoate + reduced [NADPH--hemoprotein reductase] + O2 = 3,16-dihydroxyhexadecanoate + oxidized [NADPH--hemoprotein reductase] + H2O + H(+). It catalyses the reaction leukotriene B4 + reduced [NADPH--hemoprotein reductase] + O2 = 20-hydroxy-leukotriene B4 + oxidized [NADPH--hemoprotein reductase] + H2O + H(+). The enzyme catalyses 6-trans-leukotriene B4 + reduced [NADPH--hemoprotein reductase] + O2 = 20-hydroxy-6-trans-leukotriene B4 + oxidized [NADPH--hemoprotein reductase] + H2O + H(+). The catalysed reaction is lipoxin A4 + reduced [NADPH--hemoprotein reductase] + O2 = 20-hydroxy-lipoxin A4 + oxidized [NADPH--hemoprotein reductase] + H2O + H(+). It carries out the reaction menaquinone-4 + reduced [NADPH--hemoprotein reductase] + O2 = omega-hydroxymenaquinone-4 + oxidized [NADPH--hemoprotein reductase] + H2O + H(+). It catalyses the reaction phylloquinone + reduced [NADPH--hemoprotein reductase] + O2 = omega-hydroxyphylloquinone + oxidized [NADPH--hemoprotein reductase] + H2O + H(+). The enzyme catalyses (+)-alpha-tocopherol + reduced [NADPH--hemoprotein reductase] + O2 = 13-hydroxy-alpha-tocopherol + oxidized [NADPH--hemoprotein reductase] + H2O + H(+). The catalysed reaction is gamma-tocopherol + NADPH + O2 + H(+) = 13-hydroxy-gamma-tocopherol + NADP(+) + H2O. The protein operates within lipid metabolism; arachidonate metabolism. Its pathway is lipid metabolism; leukotriene B4 degradation. It participates in cofactor degradation; phylloquinone degradation. Its activity is regulated as follows. Inhibited by dietary sesamin. Functionally, a cytochrome P450 monooxygenase involved in the metabolism of various endogenous substrates, including fatty acids, eicosanoids and vitamins. Mechanistically, uses molecular oxygen inserting one oxygen atom into a substrate, and reducing the second into a water molecule, with two electrons provided by NADPH via cytochrome P450 reductase (CPR; NADPH-ferrihemoprotein reductase). Catalyzes predominantly the oxidation of the terminal carbon (omega-oxidation) of long- and very long-chain fatty acids. Displays high omega-hydroxylase activity toward polyunsaturated fatty acids (PUFAs). Participates in the conversion of arachidonic acid to omega-hydroxyeicosatetraenoic acid (20-HETE), a signaling molecule acting both as vasoconstrictive and natriuretic with overall effect on arterial blood pressure. Plays a role in the oxidative inactivation of eicosanoids, including both pro-inflammatory and anti-inflammatory mediators such as leukotriene B4 (LTB4), lipoxin A4 (LXA4), and several HETEs. Catalyzes omega-hydroxylation of 3-hydroxy fatty acids. Converts monoepoxides of linoleic acid leukotoxin and isoleukotoxin to omega-hydroxylated metabolites. Contributes to the degradation of very long-chain fatty acids (VLCFAs) by catalyzing successive omega-oxidations and chain shortening. Plays an important role in vitamin metabolism by chain shortening. Catalyzes omega-hydroxylation of the phytyl chain of tocopherols (forms of vitamin E), with preference for gamma-tocopherols over alpha-tocopherols, thus promoting retention of alpha-tocopherols in tissues. Omega-hydroxylates and inactivates phylloquinone (vitamin K1), and menaquinone-4 (MK-4, a form of vitamin K2), both acting as cofactors in blood coagulation. The protein is Cytochrome P450 4F2 of Homo sapiens (Human).